Reading from the N-terminus, the 178-residue chain is ATP-dependent protease subunit HslV (178 aa).

The active site involves T7. Na(+) is bound by residues G162, C165, and T168.

It belongs to the peptidase T1B family. HslV subfamily. In terms of assembly, a double ring-shaped homohexamer of HslV is capped on each side by a ring-shaped HslU homohexamer. The assembly of the HslU/HslV complex is dependent on binding of ATP.

It is found in the cytoplasm. It carries out the reaction ATP-dependent cleavage of peptide bonds with broad specificity.. Its activity is regulated as follows. Allosterically activated by HslU binding. In terms of biological role, protease subunit of a proteasome-like degradation complex believed to be a general protein degrading machinery. This Burkholderia ambifaria (strain ATCC BAA-244 / DSM 16087 / CCUG 44356 / LMG 19182 / AMMD) (Burkholderia cepacia (strain AMMD)) protein is ATP-dependent protease subunit HslV.